Here is a 321-residue protein sequence, read N- to C-terminus: MIDFRPFYQQIATTNLSDWLETLPLQLKEWETQTHGDYAKWSKIVDFLSDLHADEIDLKSAVKSDRTSPLSEGEKQRIIHHLKQLMPWRKGPYHLFGIHVDCEWRSDFKWDRVLPHLSPLQGRTILDVGCGSGYHMWRMVGEGAKMVVGIDPTELFLCQFEAVRKLLNNDRRANLIPLGIEQMQPLAAFDTVFSMGVLYHRKSPLDHLSQLKNQLVKGGELVLETLVVDGDVNTVLIPADRYAKMKNVYFIPSVAALINWLEKVGFTNVRCVDVATTTLEEQRKTDWLENESLIDFLDPNDHSKTIEGYQAPKRAVILANK.

Carboxy-S-adenosyl-L-methionine is bound by residues K90, W104, K109, G129, 151–153 (DPT), 180–181 (IE), M195, Y199, and R314.

The protein belongs to the class I-like SAM-binding methyltransferase superfamily. CmoB family. As to quaternary structure, homotetramer.

The enzyme catalyses carboxy-S-adenosyl-L-methionine + 5-hydroxyuridine(34) in tRNA = 5-carboxymethoxyuridine(34) in tRNA + S-adenosyl-L-homocysteine + H(+). Functionally, catalyzes carboxymethyl transfer from carboxy-S-adenosyl-L-methionine (Cx-SAM) to 5-hydroxyuridine (ho5U) to form 5-carboxymethoxyuridine (cmo5U) at position 34 in tRNAs. This Haemophilus influenzae (strain PittEE) protein is tRNA U34 carboxymethyltransferase.